Consider the following 835-residue polypeptide: MKVLALRHSVAQVYADTQIYTHDETKDDYENAFLISNLTTHNILYLNYSVKTLQILNKSGIAAVEIQEMDELFTLIRCNFTYDYIDDIVYLHDYSYYTNNEIRTDQHWVTKTNIEDYLLPGWKLTYVGYNGNDTRGHYNFSFKCQNAATDDDAIIEYIYSNELDFQNFILKKIKERMTTSLPIARLSNRVFRDKLFKTLVSDHSRVVNVGPRNESMFTFLDHPSIKQFSNGPYLVKDTIKLKQERWLGKRLSQFDIGQYKNMLNVLTTLYQYYDMYHEKPIIYMVGSAPSYWIHDVRQYSNLKFETWDPLDTPYSDLHHKELFYISDVTKLKDNSILYVDIRTDRENTDWKAWRKIVEEQTINNLNIAYKYLSTGKAKVCCVKMTAMDLELPISAKLLHHPTTEIRSEFYLIMDIWDSKNIKRFIPKGVLYSYINNVITENVFIQQPFKLKTLRNEYVVALYALSNDFNNREDVIKLVNNQKNALITVRINNTFKDEPKVGFKDIYDWTFLPTDFETNESIITSYDGCLGMFGLSISLASKPTGNNHLFILSGTNKYFKLDQFANHMSISRRSHQIRFSESATSYSGYIFRDLSNNNFNLIGTNVENSVSGHVYNALIYYRYNYSFDLKRWIYLHATNKAGIEGGRYYEHAPIELIYACRSAKEFAKLQDDLTVLRYSNEIEDYINKVYSITYADDPNYFIGIKFKNIPYEYDVKVPHLTFGVLNISDSMVPDVVAILKKFKSELFRMDVTTSYTYMLSDEIYVANVSGVLSTYFKLYNAFYKEQITFGQSRMFIPHITLSFSNKKVVRIDSTRLNIDFIYLRKIKGDTVFDMTE.

Positions 171 to 245 (KKIKERMTTS…KDTIKLKQER (75 aa)) are N7-methyltransferase activity. The 2'-O-methyltransferase activity stretch occupies residues 246–428 (WLGKRLSQFD…KNIKRFIPKG (183 aa)). Residues 429 to 555 (VLYSYINNVI…NHLFILSGTN (127 aa)) are N7-methyltransferase activity. The segment at 556–692 (KYFKLDQFAN…DYINKVYSIT (137 aa)) is GTase/RTPase activity. The segment at 693 to 835 (YADDPNYFIG…KGDTVFDMTE (143 aa)) is 2'-5'-phosphodiesterase activity. Catalysis depends on for 2'-5'-phosphodiesterase activity residues histidine 718, threonine 720, histidine 797, and threonine 799.

This sequence belongs to the rotavirus VP3 family. As to quaternary structure, interacts with VP1. Interacts with VP2.

The protein resides in the virion. The catalysed reaction is a 5'-end diphospho-ribonucleoside in mRNA + GTP + H(+) = a 5'-end (5'-triphosphoguanosine)-ribonucleoside in mRNA + diphosphate. It catalyses the reaction a 5'-end (5'-triphosphoguanosine)-ribonucleoside in mRNA + S-adenosyl-L-methionine = a 5'-end (N(7)-methyl 5'-triphosphoguanosine)-ribonucleoside in mRNA + S-adenosyl-L-homocysteine. The enzyme catalyses 5'-triphosphoadenylyl-(2'-&gt;5')-adenylyl-(2'-&gt;5')-adenosine + 2 H2O = 2 AMP + ATP + 2 H(+). Multifunctional enzyme involved in mRNA capping. Catalyzes the formation of the 5' cap structure on the viral plus-strand transcripts. Specifically binds to GTP and displays guanylyltransferase and methyltransferase activities. Has affinity for ssRNA but not for dsRNA. Capping activity is non-specific and caps RNAs that initiate with either a G or an A residue. Together with VP1 polymerase, forms a VP1-VP3 complex positioned near the channels situated at each of the five-fold vertices of the core. Following infection, the outermost layer of the virus is lost, leaving a double-layered particle (DLP) made up of the core and VP6 shell. VP1 then catalyzes the transcription of fully conservative plus-strand genomic RNAs that are capped by VP3 and extruded through the DLP's channels into the cytoplasm where they function as mRNAs for translation of viral proteins. DLPs probably have an RNA triphosphatase activity as well, whereas open cores do not. Its function is as follows. Counteracts the host innate immune response thanks to its phosphodiesterase that degrades the 5'-triphosphorylated, 2'-5' linked adenylate oligomers produced by the host cell IFN-inducible 2',5'-oligoadenylate synthetase (OAS). The host RNaseL is therefore not activated. In Bos taurus (Bovine), this protein is Protein VP3.